Reading from the N-terminus, the 312-residue chain is Pantothenate kinase (312 aa).

Residue 97-104 (GSVAVGKS) participates in ATP binding.

The protein belongs to the prokaryotic pantothenate kinase family.

Its subcellular location is the cytoplasm. It carries out the reaction (R)-pantothenate + ATP = (R)-4'-phosphopantothenate + ADP + H(+). Its pathway is cofactor biosynthesis; coenzyme A biosynthesis; CoA from (R)-pantothenate: step 1/5. This is Pantothenate kinase from Mycobacterium marinum (strain ATCC BAA-535 / M).